The following is a 342-amino-acid chain: A-type ATP synthase subunit C (342 aa).

Belongs to the V-ATPase V0D/AC39 subunit family. In terms of assembly, has multiple subunits with at least A(3), B(3), C, D, E, F, H, I and proteolipid K(x).

The protein resides in the cell membrane. Its function is as follows. Component of the A-type ATP synthase that produces ATP from ADP in the presence of a proton gradient across the membrane. This is A-type ATP synthase subunit C from Archaeoglobus fulgidus (strain ATCC 49558 / DSM 4304 / JCM 9628 / NBRC 100126 / VC-16).